The primary structure comprises 1040 residues: Multidrug resistance protein MdtB (1040 aa).

Helical transmembrane passes span F16–I36, L347–A367, I369–L389, L396–I416, I440–F460, F472–P492, W537–I557, L863–I883, F888–A908, I911–V931, I968–V988, and I998–I1018.

It belongs to the resistance-nodulation-cell division (RND) (TC 2.A.6) family. MdtB subfamily. As to quaternary structure, part of a tripartite efflux system composed of MdtA, MdtB and MdtC. MdtB forms a heteromultimer with MdtC.

Its subcellular location is the cell inner membrane. Its function is as follows. The MdtABC tripartite complex confers resistance against novobiocin and deoxycholate. This is Multidrug resistance protein MdtB from Escherichia coli O17:K52:H18 (strain UMN026 / ExPEC).